The chain runs to 154 residues: Large ribosomal subunit protein uL13 (154 aa).

The protein belongs to the universal ribosomal protein uL13 family. In terms of assembly, part of the 50S ribosomal subunit.

In terms of biological role, this protein is one of the early assembly proteins of the 50S ribosomal subunit, although it is not seen to bind rRNA by itself. It is important during the early stages of 50S assembly. The protein is Large ribosomal subunit protein uL13 of Rhizobium etli (strain CIAT 652).